Consider the following 293-residue polypeptide: Nucleotide-binding protein Dole_0503 (293 aa).

Residue 11-18 (GLSGSGKS) participates in ATP binding. 62-65 (DLRE) contacts GTP.

It belongs to the RapZ-like family.

Functionally, displays ATPase and GTPase activities. This chain is Nucleotide-binding protein Dole_0503, found in Desulfosudis oleivorans (strain DSM 6200 / JCM 39069 / Hxd3) (Desulfococcus oleovorans).